The sequence spans 84 residues: RNA-binding protein Hfq (84 aa).

One can recognise a Sm domain in the interval 10–69 (EPFLNTLRREHVPVSIYLVNGIKLQGQIESFDQYVVLLRNTVTQMVFKHAISTIVPGRAV).

This sequence belongs to the Hfq family. As to quaternary structure, homohexamer.

Functionally, RNA chaperone that binds small regulatory RNA (sRNAs) and mRNAs to facilitate mRNA translational regulation in response to envelope stress, environmental stress and changes in metabolite concentrations. Also binds with high specificity to tRNAs. The polypeptide is RNA-binding protein Hfq (Verminephrobacter eiseniae (strain EF01-2)).